Reading from the N-terminus, the 342-residue chain is Vancomycin B-type resistance protein VanB (342 aa).

Residues Lys132, 168 to 170, 176 to 177, 206 to 213, and Phe240 each bind ATP; these read FVK, SS, and EQAISGCE. The ATP-grasp domain maps to 136–337; it reads YILTKNAGIA…LPALIDSLIT (202 aa). His243 serves as a coordination point for substrate. 303-304 lines the ATP pocket; that stretch reads NE. Mg(2+) is bound by residues Glu304 and Asn306.

The protein belongs to the D-alanine--D-alanine ligase family. Requires Mg(2+) as cofactor. Mn(2+) serves as cofactor.

It localises to the cell membrane. The enzyme catalyses (R)-lactate + D-alanine + ATP = D-alanyl-(R)-lactate + ADP + phosphate. Required for high-level resistance to glycopeptides antibiotics. D-Ala--D-Ala ligase of altered specificity which catalyzes ester bond formation between D-Ala and various D-hydroxy acids; producing a peptidoglycan which does not terminate in D-alanine but in D-lactate, thus preventing vancomycin binding. In Enterococcus faecalis (strain ATCC 700802 / V583), this protein is Vancomycin B-type resistance protein VanB (vanB).